The chain runs to 157 residues: 2-C-methyl-D-erythritol 2,4-cyclodiphosphate synthase (157 aa).

A divalent metal cation-binding residues include Asp-8 and His-10. 4-CDP-2-C-methyl-D-erythritol 2-phosphate contacts are provided by residues 8–10 (DVH) and 34–35 (HS). His-42 contributes to the a divalent metal cation binding site. Residues 56 to 58 (DIG), 61 to 65 (FPDTD), 100 to 106 (AQRPKMA), 132 to 135 (TTEE), and Phe-139 contribute to the 4-CDP-2-C-methyl-D-erythritol 2-phosphate site.

It belongs to the IspF family. Homotrimer. Requires a divalent metal cation as cofactor.

The catalysed reaction is 4-CDP-2-C-methyl-D-erythritol 2-phosphate = 2-C-methyl-D-erythritol 2,4-cyclic diphosphate + CMP. The protein operates within isoprenoid biosynthesis; isopentenyl diphosphate biosynthesis via DXP pathway; isopentenyl diphosphate from 1-deoxy-D-xylulose 5-phosphate: step 4/6. Its function is as follows. Involved in the biosynthesis of isopentenyl diphosphate (IPP) and dimethylallyl diphosphate (DMAPP), two major building blocks of isoprenoid compounds. Catalyzes the conversion of 4-diphosphocytidyl-2-C-methyl-D-erythritol 2-phosphate (CDP-ME2P) to 2-C-methyl-D-erythritol 2,4-cyclodiphosphate (ME-CPP) with a corresponding release of cytidine 5-monophosphate (CMP). The sequence is that of 2-C-methyl-D-erythritol 2,4-cyclodiphosphate synthase from Trichlorobacter lovleyi (strain ATCC BAA-1151 / DSM 17278 / SZ) (Geobacter lovleyi).